We begin with the raw amino-acid sequence, 138 residues long: Large ribosomal subunit protein uL16 (138 aa).

Positions 1–15 (MLSPKKVKYRKKQRG) are enriched in basic residues. The segment at 1–21 (MLSPKKVKYRKKQRGRLSGEA) is disordered.

The protein belongs to the universal ribosomal protein uL16 family. As to quaternary structure, part of the 50S ribosomal subunit.

Binds 23S rRNA and is also seen to make contacts with the A and possibly P site tRNAs. This Borreliella afzelii (strain PKo) (Borrelia afzelii) protein is Large ribosomal subunit protein uL16.